The following is a 469-amino-acid chain: Cyclin-dependent kinase 14 (469 aa).

Phosphoserine occurs at positions 24, 78, and 95. Residues 103–133 (FKSSSAGKESPKVRRHSSPSSPTSPKFGKAD) form a disordered region. Phosphoserine is present on Ser134. The 285-residue stretch at 135–419 (YEKLEKLGEG…AQAALSHEYF (285 aa)) folds into the Protein kinase domain. Residues 141-149 (LGEGSYATV) and Lys164 contribute to the ATP site. Asp256 functions as the Proton acceptor in the catalytic mechanism. The tract at residues 449–469 (ESMRAFGKNNSYGKSLSNSKH) is disordered. The segment covering 456–469 (KNNSYGKSLSNSKH) has biased composition (polar residues).

The protein belongs to the protein kinase superfamily. CMGC Ser/Thr protein kinase family. CDC2/CDKX subfamily. In terms of assembly, found in a complex with LRP6, CCNY and CAPRIN2 during G2/M stage; CAPRIN2 functions as a scaffold for the complex by binding to CCNY via its N terminus and to CDK14 via its C terminus. Interacts with CCNY; CCNY mediates its recruitment to the plasma membrane and promotes phosphorylation of LRP6. Interacts with CCDN3 and CDKN1A. Interacts with SEPT8. Interacts with 14-3-3 proteina YWHAB, YWHAE, YWHAH and YWHAQ. In the adult, widely expressed at low levels except in brain, kidney and testis where expression is high. In the brain, detected in cortex, hippocampus, dentate gyrus, amygdala cortex, parasubiculum and cerebellum. In the embryo, expressed predominantly in the nervous system.

It localises to the cell membrane. The protein resides in the cytoplasm. Its subcellular location is the nucleus. The catalysed reaction is L-seryl-[protein] + ATP = O-phospho-L-seryl-[protein] + ADP + H(+). It catalyses the reaction L-threonyl-[protein] + ATP = O-phospho-L-threonyl-[protein] + ADP + H(+). Its activity is regulated as follows. Serine/threonine-protein kinase activity is promoted by associated cyclins CCDN3 and CCNY and repressed by CDKN1A. Its function is as follows. Serine/threonine-protein kinase involved in the control of the eukaryotic cell cycle, whose activity is controlled by an associated cyclin. Acts as a cell-cycle regulator of Wnt signaling pathway during G2/M phase by mediating the phosphorylation of LRP6 at 'Ser-1490', leading to the activation of the Wnt signaling pathway. Acts as a regulator of cell cycle progression and cell proliferation via its interaction with CCDN3. Phosphorylates RB1 in vitro, however the relevance of such result remains to be confirmed in vivo. May also play a role in meiosis, neuron differentiation and may indirectly act as a negative regulator of insulin-responsive glucose transport. The chain is Cyclin-dependent kinase 14 (Cdk14) from Mus musculus (Mouse).